Reading from the N-terminus, the 354-residue chain is Divinyl chlorophyll a/b light-harvesting protein PcbG (354 aa).

6 helical membrane passes run 27-47, 65-85, 88-108, 201-221, 241-261, and 308-328; these read FIAAHAGHTGLISFAAGASTL, IFLAHLASIGIGFDDAGVWTG, VASVAIVHIIASLVYAGGALS, VLGGHAFLAFVEITGGAFHIA, AVLSFSLAGIGWMAIVAAFWC, and LTNVHYYFGFFFLQGHLWHAI.

It belongs to the PsbB/PsbC family. IsiA/Pcb subfamily. As to quaternary structure, the antenna complex consists of divinyl chlorophylls (a and b) and divinyl chlorophyll a/b binding proteins and binds more divinyl chlorophyll b than does the antenna complex from high-light-adapted Prochlorococcus. It depends on divinyl chlorophyll a as a cofactor. Divinyl chlorophyll b is required as a cofactor.

The protein resides in the cellular thylakoid membrane. In terms of biological role, the antenna complex functions as a light receptor, it captures and delivers excitation energy to photosystems II and I. The Prochlorales pcb genes are not related to higher plant LHCs. The protein is Divinyl chlorophyll a/b light-harvesting protein PcbG (pcbG) of Prochlorococcus marinus (strain NATL2A).